The primary structure comprises 305 residues: Acetyl-coenzyme A carboxylase carboxyl transferase subunit beta (305 aa).

A CoA carboxyltransferase N-terminal domain is found at 23 to 292; that stretch reads GWLKCTHCNE…EENEPSPPPK (270 aa). Positions 27, 30, 46, and 49 each coordinate Zn(2+). The C4-type zinc finger occupies 27 to 49; that stretch reads CTHCNELIHANELEQNSNCCPKC. Residues 281–305 are disordered; sequence FSEENEPSPPPKNLIKKTSPLKDKN.

This sequence belongs to the AccD/PCCB family. As to quaternary structure, acetyl-CoA carboxylase is a heterohexamer composed of biotin carboxyl carrier protein (AccB), biotin carboxylase (AccC) and two subunits each of ACCase subunit alpha (AccA) and ACCase subunit beta (AccD). The cofactor is Zn(2+).

The protein localises to the cytoplasm. It catalyses the reaction N(6)-carboxybiotinyl-L-lysyl-[protein] + acetyl-CoA = N(6)-biotinyl-L-lysyl-[protein] + malonyl-CoA. It participates in lipid metabolism; malonyl-CoA biosynthesis; malonyl-CoA from acetyl-CoA: step 1/1. Functionally, component of the acetyl coenzyme A carboxylase (ACC) complex. Biotin carboxylase (BC) catalyzes the carboxylation of biotin on its carrier protein (BCCP) and then the CO(2) group is transferred by the transcarboxylase to acetyl-CoA to form malonyl-CoA. The protein is Acetyl-coenzyme A carboxylase carboxyl transferase subunit beta of Protochlamydia amoebophila (strain UWE25).